Consider the following 497-residue polypeptide: Glycerol kinase (497 aa).

Residue Thr-12 participates in ADP binding. Thr-12, Thr-13, and Ser-14 together coordinate ATP. Sn-glycerol 3-phosphate is bound at residue Thr-12. Residue Arg-16 coordinates ADP. 4 residues coordinate sn-glycerol 3-phosphate: Arg-82, Glu-83, Tyr-134, and Asp-243. Glycerol contacts are provided by Arg-82, Glu-83, Tyr-134, Asp-243, and Gln-244. Residues Thr-265 and Gly-308 each contribute to the ADP site. Positions 265, 308, 312, and 409 each coordinate ATP. 2 residues coordinate ADP: Gly-409 and Asn-413.

This sequence belongs to the FGGY kinase family. Homotetramer and homodimer (in equilibrium).

It carries out the reaction glycerol + ATP = sn-glycerol 3-phosphate + ADP + H(+). It functions in the pathway polyol metabolism; glycerol degradation via glycerol kinase pathway; sn-glycerol 3-phosphate from glycerol: step 1/1. Activated by phosphorylation and inhibited by fructose 1,6-bisphosphate (FBP). Key enzyme in the regulation of glycerol uptake and metabolism. Catalyzes the phosphorylation of glycerol to yield sn-glycerol 3-phosphate. This is Glycerol kinase from Caldanaerobacter subterraneus subsp. tengcongensis (strain DSM 15242 / JCM 11007 / NBRC 100824 / MB4) (Thermoanaerobacter tengcongensis).